Consider the following 411-residue polypeptide: Flagellum-associated coiled-coil domain-containing protein 1 (411 aa).

Positions 52–77 (SQPAKSTAFPRDKAQSRKLEESNKAP) are disordered. Positions 61–74 (PRDKAQSRKLEESN) are enriched in basic and acidic residues. 2 coiled-coil regions span residues 124 to 220 (SDII…LKNM) and 278 to 328 (NESF…VVLE). Lys353 bears the N6-acetyllysine mark. A coiled-coil region spans residues 355-385 (FQTKLAEAEEKYKSTIQVLTEENNSLRQKVL).

It is found in the cytoplasm. The protein resides in the cytoplasmic granule. It localises to the cell projection. The protein localises to the cilium. Its subcellular location is the flagellum. This is Flagellum-associated coiled-coil domain-containing protein 1 from Rattus norvegicus (Rat).